A 255-amino-acid polypeptide reads, in one-letter code: Small ribosomal subunit protein eS1 (255 aa).

At Ala-2 the chain carries N-acetylalanine; partial.

This sequence belongs to the eukaryotic ribosomal protein eS1 family. In terms of assembly, component of the small ribosomal subunit. Mature ribosomes consist of a small (40S) and a large (60S) subunit. The 40S subunit contains about 33 different proteins and 1 molecule of RNA (18S). The 60S subunit contains about 49 different proteins and 3 molecules of RNA (25S, 5.8S and 5S).

Its subcellular location is the cytoplasm. This chain is Small ribosomal subunit protein eS1, found in Arthroderma otae (strain ATCC MYA-4605 / CBS 113480) (Microsporum canis).